The primary structure comprises 355 residues: Protein RecA (355 aa).

72–79 (GPESSGKT) contacts ATP.

Belongs to the RecA family.

Its subcellular location is the cytoplasm. Functionally, can catalyze the hydrolysis of ATP in the presence of single-stranded DNA, the ATP-dependent uptake of single-stranded DNA by duplex DNA, and the ATP-dependent hybridization of homologous single-stranded DNAs. It interacts with LexA causing its activation and leading to its autocatalytic cleavage. This is Protein RecA from Thermosynechococcus vestitus (strain NIES-2133 / IAM M-273 / BP-1).